The following is a 260-amino-acid chain: Phosphate import ATP-binding protein PstB 1 (260 aa).

Positions V13 to I255 constitute an ABC transporter domain. G45–S52 contributes to the ATP binding site.

It belongs to the ABC transporter superfamily. Phosphate importer (TC 3.A.1.7) family. The complex is composed of two ATP-binding proteins (PstB), two transmembrane proteins (PstC and PstA) and a solute-binding protein (PstS).

Its subcellular location is the cell inner membrane. It carries out the reaction phosphate(out) + ATP + H2O = ADP + 2 phosphate(in) + H(+). Part of the ABC transporter complex PstSACB involved in phosphate import. Responsible for energy coupling to the transport system. This Chromohalobacter salexigens (strain ATCC BAA-138 / DSM 3043 / CIP 106854 / NCIMB 13768 / 1H11) protein is Phosphate import ATP-binding protein PstB 1.